Consider the following 219-residue polypeptide: Thiamine-phosphate synthase (219 aa).

4-amino-2-methyl-5-(diphosphooxymethyl)pyrimidine contacts are provided by residues 48-52 (QLREK) and Asn80. 2 residues coordinate Mg(2+): Asp81 and Asp100. Ser119 lines the 4-amino-2-methyl-5-(diphosphooxymethyl)pyrimidine pocket. Residue 145 to 147 (TPT) coordinates 2-[(2R,5Z)-2-carboxy-4-methylthiazol-5(2H)-ylidene]ethyl phosphate. Position 148 (Lys148) interacts with 4-amino-2-methyl-5-(diphosphooxymethyl)pyrimidine. 2-[(2R,5Z)-2-carboxy-4-methylthiazol-5(2H)-ylidene]ethyl phosphate-binding positions include Gly176 and 196-197 (VS).

Belongs to the thiamine-phosphate synthase family. The cofactor is Mg(2+).

The catalysed reaction is 2-[(2R,5Z)-2-carboxy-4-methylthiazol-5(2H)-ylidene]ethyl phosphate + 4-amino-2-methyl-5-(diphosphooxymethyl)pyrimidine + 2 H(+) = thiamine phosphate + CO2 + diphosphate. The enzyme catalyses 2-(2-carboxy-4-methylthiazol-5-yl)ethyl phosphate + 4-amino-2-methyl-5-(diphosphooxymethyl)pyrimidine + 2 H(+) = thiamine phosphate + CO2 + diphosphate. It carries out the reaction 4-methyl-5-(2-phosphooxyethyl)-thiazole + 4-amino-2-methyl-5-(diphosphooxymethyl)pyrimidine + H(+) = thiamine phosphate + diphosphate. Its pathway is cofactor biosynthesis; thiamine diphosphate biosynthesis; thiamine phosphate from 4-amino-2-methyl-5-diphosphomethylpyrimidine and 4-methyl-5-(2-phosphoethyl)-thiazole: step 1/1. In terms of biological role, condenses 4-methyl-5-(beta-hydroxyethyl)thiazole monophosphate (THZ-P) and 2-methyl-4-amino-5-hydroxymethyl pyrimidine pyrophosphate (HMP-PP) to form thiamine monophosphate (TMP). The polypeptide is Thiamine-phosphate synthase (Albidiferax ferrireducens (strain ATCC BAA-621 / DSM 15236 / T118) (Rhodoferax ferrireducens)).